The sequence spans 201 residues: Large ribosomal subunit protein bL25 (201 aa).

Belongs to the bacterial ribosomal protein bL25 family. CTC subfamily. As to quaternary structure, part of the 50S ribosomal subunit; part of the 5S rRNA/L5/L18/L25 subcomplex. Contacts the 5S rRNA. Binds to the 5S rRNA independently of L5 and L18.

In terms of biological role, this is one of the proteins that binds to the 5S RNA in the ribosome where it forms part of the central protuberance. This Akkermansia muciniphila (strain ATCC BAA-835 / DSM 22959 / JCM 33894 / BCRC 81048 / CCUG 64013 / CIP 107961 / Muc) protein is Large ribosomal subunit protein bL25.